The sequence spans 435 residues: Eukaryotic peptide chain release factor subunit 1-3 (435 aa).

At A2 the chain carries N-acetylalanine.

Belongs to the eukaryotic release factor 1 family. In terms of assembly, heterodimer of two subunits, one of which binds GTP.

The protein localises to the cytoplasm. In terms of biological role, directs the termination of nascent peptide synthesis (translation) in response to the termination codons UAA, UAG and UGA. Modulates plant growth and development. This is Eukaryotic peptide chain release factor subunit 1-3 from Brassica oleracea var. botrytis (Cauliflower).